The following is a 138-amino-acid chain: Large ribosomal subunit protein uL16 (138 aa).

Positions 1–17 (MLIPRKVKHRKQHHPRQ) are enriched in basic residues. A disordered region spans residues 1–22 (MLIPRKVKHRKQHHPRQRGIAS).

Belongs to the universal ribosomal protein uL16 family. Part of the 50S ribosomal subunit.

Binds 23S rRNA and is also seen to make contacts with the A and possibly P site tRNAs. This is Large ribosomal subunit protein uL16 from Mycobacterium avium (strain 104).